The chain runs to 379 residues: Homoserine O-succinyltransferase (379 aa).

The AB hydrolase-1 domain occupies 51 to 360; it reads NAVLICHALS…DSPYGHDAFL (310 aa). Catalysis depends on serine 157, which acts as the Nucleophile. Arginine 227 lines the substrate pocket. Residues aspartate 323 and histidine 356 contribute to the active site. Substrate is bound at residue aspartate 357.

It belongs to the AB hydrolase superfamily. MetX family. As to quaternary structure, homodimer.

It is found in the cytoplasm. The enzyme catalyses L-homoserine + succinyl-CoA = O-succinyl-L-homoserine + CoA. It participates in amino-acid biosynthesis; L-methionine biosynthesis via de novo pathway; O-succinyl-L-homoserine from L-homoserine: step 1/1. Functionally, transfers a succinyl group from succinyl-CoA to L-homoserine, forming succinyl-L-homoserine. The sequence is that of Homoserine O-succinyltransferase from Pseudomonas entomophila (strain L48).